The sequence spans 129 residues: Small ribosomal subunit protein uS11 (129 aa).

It belongs to the universal ribosomal protein uS11 family. As to quaternary structure, part of the 30S ribosomal subunit. Interacts with proteins S7 and S18. Binds to IF-3.

Functionally, located on the platform of the 30S subunit, it bridges several disparate RNA helices of the 16S rRNA. Forms part of the Shine-Dalgarno cleft in the 70S ribosome. The chain is Small ribosomal subunit protein uS11 from Erythrobacter litoralis (strain HTCC2594).